A 199-amino-acid polypeptide reads, in one-letter code: Pyridoxal 5'-phosphate synthase subunit PdxT (199 aa).

47-49 (GES) is an L-glutamine binding site. The Nucleophile role is filled by Cys-79. Residues Arg-106 and 133–134 (IR) each bind L-glutamine. Residues His-169 and Glu-171 each act as charge relay system in the active site.

Belongs to the glutaminase PdxT/SNO family. In the presence of PdxS, forms a dodecamer of heterodimers. Only shows activity in the heterodimer.

It carries out the reaction aldehydo-D-ribose 5-phosphate + D-glyceraldehyde 3-phosphate + L-glutamine = pyridoxal 5'-phosphate + L-glutamate + phosphate + 3 H2O + H(+). It catalyses the reaction L-glutamine + H2O = L-glutamate + NH4(+). The protein operates within cofactor biosynthesis; pyridoxal 5'-phosphate biosynthesis. Its function is as follows. Catalyzes the hydrolysis of glutamine to glutamate and ammonia as part of the biosynthesis of pyridoxal 5'-phosphate. The resulting ammonia molecule is channeled to the active site of PdxS. This is Pyridoxal 5'-phosphate synthase subunit PdxT from Desulfitobacterium hafniense (strain Y51).